Here is a 934-residue protein sequence, read N- to C-terminus: Glycine dehydrogenase (decarboxylating) (934 aa).

The residue at position 687 (Lys-687) is an N6-(pyridoxal phosphate)lysine.

It belongs to the GcvP family. The glycine cleavage system is composed of four proteins: P, T, L and H. It depends on pyridoxal 5'-phosphate as a cofactor.

It catalyses the reaction N(6)-[(R)-lipoyl]-L-lysyl-[glycine-cleavage complex H protein] + glycine + H(+) = N(6)-[(R)-S(8)-aminomethyldihydrolipoyl]-L-lysyl-[glycine-cleavage complex H protein] + CO2. Functionally, the glycine cleavage system catalyzes the degradation of glycine. The P protein binds the alpha-amino group of glycine through its pyridoxal phosphate cofactor; CO(2) is released and the remaining methylamine moiety is then transferred to the lipoamide cofactor of the H protein. This is Glycine dehydrogenase (decarboxylating) from Nocardia farcinica (strain IFM 10152).